Consider the following 524-residue polypeptide: Phosphoenolpyruvate carboxykinase (ATP) (524 aa).

Substrate contacts are provided by Arg-52, Tyr-188, and Lys-194. ATP contacts are provided by residues Lys-194, His-213, and 229–237 (GLSGTGKTT). Residues Lys-194 and His-213 each contribute to the Mn(2+) site. Residue Asp-250 coordinates Mn(2+). Positions 278, 314, and 439 each coordinate ATP. Arg-314 contributes to the substrate binding site.

It belongs to the phosphoenolpyruvate carboxykinase (ATP) family. Mn(2+) serves as cofactor.

It is found in the cytoplasm. The catalysed reaction is oxaloacetate + ATP = phosphoenolpyruvate + ADP + CO2. The protein operates within carbohydrate biosynthesis; gluconeogenesis. Involved in the gluconeogenesis. Catalyzes the conversion of oxaloacetate (OAA) to phosphoenolpyruvate (PEP) through direct phosphoryl transfer between the nucleoside triphosphate and OAA. This Campylobacter jejuni subsp. doylei (strain ATCC BAA-1458 / RM4099 / 269.97) protein is Phosphoenolpyruvate carboxykinase (ATP).